The following is a 1073-amino-acid chain: Carbamoyl phosphate synthase large chain (1073 aa).

Residues 1–399 (MPKREDIKKV…SLLKAFKSLD (399 aa)) form a carboxyphosphate synthetic domain region. ATP contacts are provided by Arg129, Arg169, Gly175, Gly176, Glu208, Val210, Glu215, Gly241, Val242, His243, Gln284, and Glu296. An ATP-grasp 1 domain is found at 133-325 (KETMLSIGEK…IARVTAKIAI (193 aa)). The Mg(2+) site is built by Gln284, Glu296, and Asn298. Residues Gln284, Glu296, and Asn298 each coordinate Mn(2+). The interval 400 to 540 (IDNQLGIKRW…YSTYEDTCET (141 aa)) is oligomerization domain. The interval 541–931 (NSTDKKKILI…YKAELAADNL (391 aa)) is carbamoyl phosphate synthetic domain. In terms of domain architecture, ATP-grasp 2 spans 672 to 863 (YLLMQELGIP…LAKIAAKVIA (192 aa)). Residues Arg708, Asp747, Leu749, Glu754, Gly779, Val780, His781, Ser782, Gln822, and Glu834 each contribute to the ATP site. Positions 822, 834, and 836 each coordinate Mg(2+). Mn(2+) is bound by residues Gln822, Glu834, and Asn836. In terms of domain architecture, MGS-like spans 930-1071 (NLLPLTGKVF…NEYHKEMEQK (142 aa)). Residues 932–1073 (LPLTGKVFLS…YHKEMEQKEE (142 aa)) are allosteric domain.

Belongs to the CarB family. Composed of two chains; the small (or glutamine) chain promotes the hydrolysis of glutamine to ammonia, which is used by the large (or ammonia) chain to synthesize carbamoyl phosphate. Tetramer of heterodimers (alpha,beta)4. It depends on Mg(2+) as a cofactor. Mn(2+) is required as a cofactor.

The enzyme catalyses hydrogencarbonate + L-glutamine + 2 ATP + H2O = carbamoyl phosphate + L-glutamate + 2 ADP + phosphate + 2 H(+). It catalyses the reaction hydrogencarbonate + NH4(+) + 2 ATP = carbamoyl phosphate + 2 ADP + phosphate + 2 H(+). It participates in amino-acid biosynthesis; L-arginine biosynthesis; carbamoyl phosphate from bicarbonate: step 1/1. It functions in the pathway pyrimidine metabolism; UMP biosynthesis via de novo pathway; (S)-dihydroorotate from bicarbonate: step 1/3. Functionally, large subunit of the glutamine-dependent carbamoyl phosphate synthetase (CPSase). CPSase catalyzes the formation of carbamoyl phosphate from the ammonia moiety of glutamine, carbonate, and phosphate donated by ATP, constituting the first step of 2 biosynthetic pathways, one leading to arginine and/or urea and the other to pyrimidine nucleotides. The large subunit (synthetase) binds the substrates ammonia (free or transferred from glutamine from the small subunit), hydrogencarbonate and ATP and carries out an ATP-coupled ligase reaction, activating hydrogencarbonate by forming carboxy phosphate which reacts with ammonia to form carbamoyl phosphate. The chain is Carbamoyl phosphate synthase large chain from Methanosarcina mazei (strain ATCC BAA-159 / DSM 3647 / Goe1 / Go1 / JCM 11833 / OCM 88) (Methanosarcina frisia).